We begin with the raw amino-acid sequence, 267 residues long: Protein TIFY 7 (267 aa).

Residues 113–148 form the Tify domain; that stretch reads SSGSSPQLTIFYGGTISVFNDISPDKAQAIMLCAGN. The Jas motif lies at 220–244; sequence PQARKASLARFLEKRKERLMSAMPY. The Nuclear localization signal signature appears at 222–229; that stretch reads ARKASLAR.

Belongs to the TIFY/JAZ family. As to quaternary structure, homo- and heterodimer. Interacts with MYC2, MYC3, MYC4, COI1, AFPH2/NINJA, TIFY10A/JAZ1, TIFY10B/JAZ2, TIFY6B/JAZ3, TIFY5A/JAZ8, TIFY9/JAZ10 and TIFY3A/JAZ11. Interacts with RHD6 and RSL1. In terms of processing, ubiquitinated. Targeted for degradation by the SCF(COI1) E3 ubiquitin ligase-proteasome pathway during jasmonate signaling.

Its subcellular location is the nucleus. Its function is as follows. Repressor of jasmonate responses. Jasmonoyl-isoleucine (JA-Ile) specifically promotes COI1-TIFY7/JAZ9 interaction. Interacts with and suppresses RHD6 and RSL1 transcription factor activities to negatively regulate jasmonate-stimulated root hair development. The sequence is that of Protein TIFY 7 (TIFY7) from Arabidopsis thaliana (Mouse-ear cress).